The chain runs to 557 residues: Copine-6 (557 aa).

C2 domains follow at residues 2 to 127 (SDPE…TKPL) and 134 to 263 (TAGK…MQWD). The Ca(2+) site is built by aspartate 167, aspartate 173, aspartate 229, aspartate 231, and aspartate 237. The linker region stretch occupies residues 244-303 (STFQEMQEGTANPGQEMQWDCINPKYRDKKKNYKSSGTVVLAQCTVEKVHTFLDYIMGGC). In terms of domain architecture, VWFA spans 306–526 (SFTVAIDFTA…ALAKCVLAEV (221 aa)).

This sequence belongs to the copine family. As to quaternary structure, interacts (via second C2 domain) with OS9 (via C-terminus); this interaction occurs in a calcium-dependent manner in vitro. May interact with NECAB1. The cofactor is Ca(2+). In terms of tissue distribution, widely expressed in the brain. Expressed weakly in the kidney, liver and fetal heart. Expressed in melanocytes.

Its subcellular location is the cytoplasm. It is found in the cell membrane. The protein resides in the endosome. It localises to the cytoplasmic vesicle. The protein localises to the clathrin-coated vesicle. Its subcellular location is the perikaryon. It is found in the cell projection. The protein resides in the dendrite. Calcium-dependent phospholipid-binding protein that plays a role in calcium-mediated intracellular processes. Binds phospholipid membranes in a calcium-dependent manner. Plays a role in dendrite formation by melanocytes. The polypeptide is Copine-6 (Homo sapiens (Human)).